The primary structure comprises 571 residues: Sulfite reductase [NADPH] hemoprotein beta-component (571 aa).

Positions 436, 442, 481, and 485 each coordinate [4Fe-4S] cluster. Cysteine 485 serves as a coordination point for siroheme.

It belongs to the nitrite and sulfite reductase 4Fe-4S domain family. In terms of assembly, alpha(8)-beta(8). The alpha component is a flavoprotein, the beta component is a hemoprotein. Siroheme is required as a cofactor. It depends on [4Fe-4S] cluster as a cofactor.

The catalysed reaction is hydrogen sulfide + 3 NADP(+) + 3 H2O = sulfite + 3 NADPH + 4 H(+). The protein operates within sulfur metabolism; hydrogen sulfide biosynthesis; hydrogen sulfide from sulfite (NADPH route): step 1/1. Component of the sulfite reductase complex that catalyzes the 6-electron reduction of sulfite to sulfide. This is one of several activities required for the biosynthesis of L-cysteine from sulfate. This Bacillus velezensis (strain DSM 23117 / BGSC 10A6 / LMG 26770 / FZB42) (Bacillus amyloliquefaciens subsp. plantarum) protein is Sulfite reductase [NADPH] hemoprotein beta-component.